Here is a 147-residue protein sequence, read N- to C-terminus: 3-dehydroquinate dehydratase (147 aa).

Tyrosine 23 (proton acceptor) is an active-site residue. Substrate-binding residues include asparagine 74, histidine 80, and aspartate 87. The active-site Proton donor is histidine 100. Substrate contacts are provided by residues 101–102 (LS) and arginine 111.

Belongs to the type-II 3-dehydroquinase family. In terms of assembly, homododecamer.

The catalysed reaction is 3-dehydroquinate = 3-dehydroshikimate + H2O. It functions in the pathway metabolic intermediate biosynthesis; chorismate biosynthesis; chorismate from D-erythrose 4-phosphate and phosphoenolpyruvate: step 3/7. In terms of biological role, catalyzes a trans-dehydration via an enolate intermediate. This chain is 3-dehydroquinate dehydratase, found in Clostridium botulinum (strain Loch Maree / Type A3).